A 434-amino-acid chain; its full sequence is 3-phosphoshikimate 1-carboxyvinyltransferase (434 aa).

Residues K22, S23, and R27 each contribute to the 3-phosphoshikimate site. K22 is a binding site for phosphoenolpyruvate. Phosphoenolpyruvate-binding residues include G93 and R121. The 3-phosphoshikimate site is built by S168, S169, Q170, S199, D320, and K347. Q170 is a binding site for phosphoenolpyruvate. D320 acts as the Proton acceptor in catalysis. Positions 351, 394, and 419 each coordinate phosphoenolpyruvate.

It belongs to the EPSP synthase family. Monomer.

It localises to the cytoplasm. The catalysed reaction is 3-phosphoshikimate + phosphoenolpyruvate = 5-O-(1-carboxyvinyl)-3-phosphoshikimate + phosphate. The protein operates within metabolic intermediate biosynthesis; chorismate biosynthesis; chorismate from D-erythrose 4-phosphate and phosphoenolpyruvate: step 6/7. Its function is as follows. Catalyzes the transfer of the enolpyruvyl moiety of phosphoenolpyruvate (PEP) to the 5-hydroxyl of shikimate-3-phosphate (S3P) to produce enolpyruvyl shikimate-3-phosphate and inorganic phosphate. This Paraburkholderia phymatum (strain DSM 17167 / CIP 108236 / LMG 21445 / STM815) (Burkholderia phymatum) protein is 3-phosphoshikimate 1-carboxyvinyltransferase.